We begin with the raw amino-acid sequence, 661 residues long: KVSDSAYSNSCSNSQSQRSGSSKSRLSGSHSSGSSGYGGKPSTQASSSDMIIKRNKDKSRKKKKNKGAGQGAGQAQTLISASTSLEGRDEEKPRPSGTGCVEQQICRELQDQQHGEDHSEPQAAEQLQQEEDQSGSESEADRVEGVAKSEAVQSFPIPSPLSVTIVPPSMGGCGGVGHAAGLDSGLAKFDKTWEAGPGKLESMTGVGAAAAGTGQRGERVKEDSFCCVISMHDGIVLYTTPSITDVLGYPRDMWLGRSFIDFVHLKDRATFASQITTGIPIAESRGSVPKDAKSTFCVMLRRYRGLKSGGFGVIGRPVSYEPFRLGLTFREAPEEARPDNYMVSNGTNMLLVICATPIKSSYKVPDEILSQKSPKFAIRHTATGIISHVDSAAVSALGYLPQDLIGRSIMDFYHHEDLSVMKETYETVMKKGQTAGASFCSKPYRFLIQNGCYVLLETEWTSFVNPWSRKLEFVVGHHRVFQGPKQCNVFEAAPTCKLKISEEAQSRNTRIKEDIVKRLAETVSRPSDTVKQEVSRRCQALASFMETLMDEVSRADLKEGSGGSGSSGNFTTASNIHMSSVTNTSIAGTGGTGTGTGTGTGTGTGTGTGTGTGTGTGTGTGTGTGTGTGTGNGTNSGTTSSSRGGSAAAPPVTLTESLLNK.

Over residues 1 to 34 (KVSDSAYSNSCSNSQSQRSGSSKSRLSGSHSSGS) the composition is skewed to low complexity. Residues 1 to 151 (KVSDSAYSNS…RVEGVAKSEA (151 aa)) form a disordered region. A Nuclear localization signal motif is present at residues 53 to 66 (KRNKDKSRKKKKNK). The span at 53–66 (KRNKDKSRKKKKNK) shows a compositional bias: basic residues. A compositionally biased stretch (basic and acidic residues) spans 108–120 (ELQDQQHGEDHSE). PAS domains follow at residues 223 to 358 (DSFC…ATPI) and 376 to 482 (FAIR…RVFQ). A disordered region spans residues 582–661 (TNTSIAGTGG…VTLTESLLNK (80 aa)). The segment covering 588–634 (GTGGTGTGTGTGTGTGTGTGTGTGTGTGTGTGTGTGTGTGTGTGNGT) has biased composition (gly residues). 22 repeat units span residues 591 to 592 (GT), 593 to 594 (GT), 595 to 596 (GT), 597 to 598 (GT), 599 to 600 (GT), 601 to 602 (GT), 603 to 604 (GT), 605 to 606 (GT), 607 to 608 (GT), 609 to 610 (GT), 611 to 612 (GT), 613 to 614 (GT), 615 to 616 (GT), 617 to 618 (GT), 619 to 620 (GT), 621 to 622 (GT), 623 to 624 (GT), 625 to 626 (GT), 627 to 628 (GT), 629 to 630 (GT), 631 to 632 (GN), and 633 to 634 (GT). The segment at 591-638 (GTGTGTGTGTGTGTGTGTGTGTGTGTGTGTGTGTGTGTGTGNGTNSGT) is 24 X 2 AA approximate tandem repeats of G-[TN]. The stretch at 635-636 (NS) is one 23; approximate repeat. Positions 635-646 (NSGTTSSSRGGS) are enriched in low complexity. The stretch at 637 to 638 (GT) is repeat 24.

Forms a heterodimer with timeless (TIM); the complex then translocates into the nucleus. Phosphorylated with a circadian rhythmicity, probably by the double-time protein (dbt). Phosphorylation could be implicated in the stability of per monomer and in the formation of heterodimer per-tim.

Its subcellular location is the nucleus. The protein localises to the cytoplasm. The protein resides in the perinuclear region. Essential for biological clock functions. Determines the period length of circadian and ultradian rhythms; an increase in PER dosage leads to shortened circadian rhythms and a decrease leads to lengthened circadian rhythms. Essential for the circadian rhythmicity of locomotor activity, eclosion behavior, and for the rhythmic component of the male courtship song that originates in the thoracic nervous system. The biological cycle depends on the rhythmic formation and nuclear localization of the TIM-PER complex. Light induces the degradation of TIM, which promotes elimination of PER. Nuclear activity of the heterodimer coordinatively regulates PER and TIM transcription through a negative feedback loop. Behaves as a negative element in circadian transcriptional loop. Does not appear to bind DNA, suggesting indirect transcriptional inhibition. The chain is Period circadian protein (per) from Drosophila sechellia (Fruit fly).